The following is a 530-amino-acid chain: Bifunctional purine biosynthesis protein PurH (530 aa).

An MGS-like domain is found at 1-148 (MNNARPIRRA…KNHKDVTIVV (148 aa)).

Belongs to the PurH family.

It carries out the reaction (6R)-10-formyltetrahydrofolate + 5-amino-1-(5-phospho-beta-D-ribosyl)imidazole-4-carboxamide = 5-formamido-1-(5-phospho-D-ribosyl)imidazole-4-carboxamide + (6S)-5,6,7,8-tetrahydrofolate. It catalyses the reaction IMP + H2O = 5-formamido-1-(5-phospho-D-ribosyl)imidazole-4-carboxamide. It functions in the pathway purine metabolism; IMP biosynthesis via de novo pathway; 5-formamido-1-(5-phospho-D-ribosyl)imidazole-4-carboxamide from 5-amino-1-(5-phospho-D-ribosyl)imidazole-4-carboxamide (10-formyl THF route): step 1/1. It participates in purine metabolism; IMP biosynthesis via de novo pathway; IMP from 5-formamido-1-(5-phospho-D-ribosyl)imidazole-4-carboxamide: step 1/1. In Vibrio campbellii (strain ATCC BAA-1116), this protein is Bifunctional purine biosynthesis protein PurH.